Reading from the N-terminus, the 390-residue chain is MTDVALPPAALTLPNDSVGVVTPQRMHFQEPLKLRNGSSIAGYDLMVETYGTLNADRSNAVLVCHALNASHHVAGVYADDPRDVGWWDNMVGPGKPLDTNRFFVIGVNNLGSCFGSTGPMSTNPATGEPYGAAFPVVTVEDWVNAQARVADVFGITQFAAVMGGSLGGMQAVAWSLMYPQRLRHCIVVASTPKLSAQNIAFNEVARSSILSDPDFHGGNYYAHGVKPKRGLRVARMIGHITYLSDEDMAEKFGRELKTEDIRFSFDVEFQVESYLRYQGDKFAEYFDANTYLLITRALDYFDPALAYGGDLTRAMAQTQASFLVASFTTDWRFAPNRSRELVKALLDNKRPVSYAEIDAPHGHDAFLLDDPRYHNLMRAYYDRIAEEIGA.

Residues 59 to 369 (NAVLVCHALN…PHGHDAFLLD (311 aa)) enclose the AB hydrolase-1 domain. The Nucleophile role is filled by S165. R235 is a binding site for substrate. Residues D330 and H363 contribute to the active site. A substrate-binding site is contributed by D364.

The protein belongs to the AB hydrolase superfamily. MetX family. As to quaternary structure, homodimer.

The protein localises to the cytoplasm. The enzyme catalyses L-homoserine + succinyl-CoA = O-succinyl-L-homoserine + CoA. The protein operates within amino-acid biosynthesis; L-methionine biosynthesis via de novo pathway; O-succinyl-L-homoserine from L-homoserine: step 1/1. In terms of biological role, transfers a succinyl group from succinyl-CoA to L-homoserine, forming succinyl-L-homoserine. The protein is Homoserine O-succinyltransferase of Cupriavidus pinatubonensis (strain JMP 134 / LMG 1197) (Cupriavidus necator (strain JMP 134)).